The chain runs to 467 residues: Asparagine--tRNA ligase (467 aa).

This sequence belongs to the class-II aminoacyl-tRNA synthetase family. As to quaternary structure, homodimer.

It localises to the cytoplasm. It catalyses the reaction tRNA(Asn) + L-asparagine + ATP = L-asparaginyl-tRNA(Asn) + AMP + diphosphate + H(+). This is Asparagine--tRNA ligase from Legionella pneumophila (strain Corby).